Here is a 1025-residue protein sequence, read N- to C-terminus: Protein mono-ADP-ribosyltransferase PARP10 (1025 aa).

Thr-101 bears the Phosphothreonine mark. Glu-106 carries the post-translational modification ADP-ribosyl glutamic acid. At Lys-140 the chain carries N6-(ADP-ribosyl)lysine. The segment at 318–346 (GIMTTGSGQEPGQSGTSLRTGPMGSLGQA) is disordered. Residues 321–336 (TTGSGQEPGQSGTSLR) show a composition bias toward polar residues. Residues Ser-378, Ser-423, and Ser-431 each carry the phosphoserine modification. Disordered regions lie at residues 569–589 (VLPG…DQED) and 617–644 (LEEE…APST). The segment covering 617–639 (LEEEGPQEQPEEEVTPGHEEEEP) has biased composition (acidic residues). Short sequence motifs (ubiquitin-interacting) lie at residues 650–667 (LEEE…LEPQ) and 673–690 (QEEA…LLEQ). The residue at position 663 (Ser-663) is a Phosphoserine. The tract at residues 700–907 (DGGTDGKAQL…CAHGFNRSFC (208 aa)) is myc binding. The PARP catalytic domain maps to 806–1025 (PTLAGQTLKG…SGLPGRSPDT (220 aa)). The PIP-box motif lies at 831–838 (QEVVRAFY). Glu-882 is subject to ADP-ribosyl glutamic acid. Lys-916 is modified (N6-(ADP-ribosyl)lysine). Lys-916 bears the N6-acetyllysine mark. Residues 1006 to 1025 (HVPRASPDDPSGLPGRSPDT) form a disordered region. Ser-1011 is modified (phosphoserine).

This sequence belongs to the ARTD/PARP family. Interacts with MYC. Interacts with PARP14. Interacts (via-PIP box and ubiquitin-interacting motifs) with PCNA. Post-translationally, stimulated through its phosphorylation by CDK2. Acquires CDK-dependent phosphorylation through late-G1 to S phase, and from prometaphase to cytokinesis in the nucleolar organizing regions. Phosphorylation is suppressed in growth-arrested cells. Auto-mono-ADP-ribosylated on glutamate and lysine residues. As to expression, highly expressed in spleen and thymus. Intermediate levels in liver, kidney, pancreas, prostate, testis, ovary, intestine, and leukocytes. Low expression in heart, brain, placenta, lung, skeletal muscle, and colon.

It is found in the nucleus. It localises to the nucleolus. The protein resides in the cytoplasm. It carries out the reaction L-lysyl-[protein] + NAD(+) = N(6)-(ADP-D-ribosyl)-L-lysyl-[protein] + nicotinamide + H(+). It catalyses the reaction L-aspartyl-[protein] + NAD(+) = 4-O-(ADP-D-ribosyl)-L-aspartyl-[protein] + nicotinamide. The enzyme catalyses L-glutamyl-[protein] + NAD(+) = 5-O-(ADP-D-ribosyl)-L-glutamyl-[protein] + nicotinamide. Functionally, ADP-ribosyltransferase that mediates mono-ADP-ribosylation of glutamate and aspartate residues on target proteins. In contrast to PARP1 and PARP2, it is not able to mediate poly-ADP-ribosylation. Catalyzes mono-ADP-ribosylation of GSK3B, leading to negatively regulate GSK3B kinase activity. Involved in translesion DNA synthesis in response to DNA damage via its interaction with PCNA. The protein is Protein mono-ADP-ribosyltransferase PARP10 of Homo sapiens (Human).